Consider the following 72-residue polypeptide: N-alpha-acetyltransferase 38, NatC auxiliary subunit (72 aa).

In terms of domain architecture, Sm spans 3-72 (NGEILLTSWL…KHIKSFSVRA (70 aa)).

As to quaternary structure, component of the N-terminal acetyltransferase C (NatC) complex, composed of the catalytic subunit Naa30, a large auxiliary subunit Naa35 and a small auxiliary subunit Naa38.

It localises to the endoplasmic reticulum. Its function is as follows. Component of the NatC N-terminal acetyltransferase, which associates with the ribosome to acetylate nascent protein chains in a cotranslational manner. NatC acetylates protein N-termini starting with methionine, followed by a hydrophobic or amphipathic amino acid, with amino acids at positions 3 and 4 also contributing to NatC recognition. The first 4 amino acids of cognate substrates are recognized at the Naa30-Naa35 interface. NatC-dependent acetylation targets various substrate proteins to specific subcellular sites. In Schizosaccharomyces pombe (strain 972 / ATCC 24843) (Fission yeast), this protein is N-alpha-acetyltransferase 38, NatC auxiliary subunit (naa38).